Reading from the N-terminus, the 566-residue chain is Putative pentatricopeptide repeat-containing protein At1g28020 (566 aa).

9 PPR repeats span residues 136–171 (GDSV…GLLL), 172–206 (RPVP…DVEA), 207–242 (DNVT…GIKL), 243–273 (EWHT…TEQL), 279–309 (LKSA…YKSK), 314–348 (DNNG…PLEF), 349–385 (DHRI…RMNK), 468–504 (DYSV…NVDP), and 505–540 (DLIT…GIKL).

Belongs to the PPR family. P subfamily.

The polypeptide is Putative pentatricopeptide repeat-containing protein At1g28020 (Arabidopsis thaliana (Mouse-ear cress)).